The following is a 337-amino-acid chain: tRNA N6-adenosine threonylcarbamoyltransferase (337 aa).

Fe cation contacts are provided by H111 and H115. Residues L134 to G138, D167, G180, and N272 contribute to the substrate site. Residue D300 participates in Fe cation binding.

Belongs to the KAE1 / TsaD family. Requires Fe(2+) as cofactor.

The protein localises to the cytoplasm. It carries out the reaction L-threonylcarbamoyladenylate + adenosine(37) in tRNA = N(6)-L-threonylcarbamoyladenosine(37) in tRNA + AMP + H(+). Its function is as follows. Required for the formation of a threonylcarbamoyl group on adenosine at position 37 (t(6)A37) in tRNAs that read codons beginning with adenine. Is involved in the transfer of the threonylcarbamoyl moiety of threonylcarbamoyl-AMP (TC-AMP) to the N6 group of A37, together with TsaE and TsaB. TsaD likely plays a direct catalytic role in this reaction. This Salmonella agona (strain SL483) protein is tRNA N6-adenosine threonylcarbamoyltransferase.